We begin with the raw amino-acid sequence, 328 residues long: Phosphate acyltransferase (328 aa).

Belongs to the PlsX family. In terms of assembly, homodimer. Probably interacts with PlsY.

The protein resides in the cytoplasm. It catalyses the reaction a fatty acyl-[ACP] + phosphate = an acyl phosphate + holo-[ACP]. Its pathway is lipid metabolism; phospholipid metabolism. Its function is as follows. Catalyzes the reversible formation of acyl-phosphate (acyl-PO(4)) from acyl-[acyl-carrier-protein] (acyl-ACP). This enzyme utilizes acyl-ACP as fatty acyl donor, but not acyl-CoA. In Staphylococcus aureus (strain MRSA252), this protein is Phosphate acyltransferase.